Here is a 1148-residue protein sequence, read N- to C-terminus: Maintenance of telomere capping protein 5 (1148 aa).

5 WD repeats span residues 63-106, 112-152, 156-195, 199-239, and 299-348; these read HHIT…SNAI, GHSR…RPFY, SWRS…TPLC, GHVS…TESK, and GHSD…YGKV. One can recognise an RWD domain in the interval 432-543; it reads EEVSAIGHKF…RFVLGEKVSL (112 aa). At serine 759 the chain carries Phosphoserine. The interval 963 to 990 is disordered; the sequence is THNTLNGSSKFTEPAQKQGSRAISSSPF. Positions 964–990 are enriched in polar residues; sequence HNTLNGSSKFTEPAQKQGSRAISSSPF.

This sequence belongs to the WD repeat WDR59 family. As to quaternary structure, component of the SEA complex composed of at least IML1/SEA1, RTC1/SEA2, MTC5/SEA3, NPR2, NPR3, SEA4, SEC13 and SEH1.

It localises to the vacuole membrane. Functionally, component of the SEA complex which coats the vacuolar membrane and is involved in intracellular trafficking, autophagy, response to nitrogen starvation, and amino acid biogenesis. May be involved in telomere capping. The polypeptide is Maintenance of telomere capping protein 5 (MTC5) (Saccharomyces cerevisiae (strain ATCC 204508 / S288c) (Baker's yeast)).